The following is a 539-amino-acid chain: O-phosphoserine--tRNA(Cys) ligase (539 aa).

Substrate contacts are provided by residues 188–190, 233–235, 275–276, and Asn-327; these read HMT, SAS, and YY.

It belongs to the class-II aminoacyl-tRNA synthetase family. O-phosphoseryl-tRNA(Cys) synthetase subfamily. Homotetramer. Interacts with SepCysS.

The catalysed reaction is tRNA(Cys) + O-phospho-L-serine + ATP = O-phospho-L-seryl-tRNA(Cys) + AMP + diphosphate. Its function is as follows. Catalyzes the attachment of O-phosphoserine (Sep) to tRNA(Cys). The protein is O-phosphoserine--tRNA(Cys) ligase of Methanosarcina acetivorans (strain ATCC 35395 / DSM 2834 / JCM 12185 / C2A).